Here is a 109-residue protein sequence, read N- to C-terminus: ATP-dependent Clp protease adapter protein ClpS (109 aa).

Residues 1–23 (MTERKHDDTGVEEGTGLATKTRP) form a disordered region.

It belongs to the ClpS family. In terms of assembly, binds to the N-terminal domain of the chaperone ClpA.

Functionally, involved in the modulation of the specificity of the ClpAP-mediated ATP-dependent protein degradation. This Maricaulis maris (strain MCS10) (Caulobacter maris) protein is ATP-dependent Clp protease adapter protein ClpS.